The sequence spans 122 residues: UPF0231 protein VSAL_I2591 (122 aa).

It belongs to the UPF0231 family.

This Aliivibrio salmonicida (strain LFI1238) (Vibrio salmonicida (strain LFI1238)) protein is UPF0231 protein VSAL_I2591.